Consider the following 546-residue polypeptide: CTP synthase (546 aa).

Residues 1–266 form an amidoligase domain region; that stretch reads MTTRYIFVTG…DDLVVKRFGL (266 aa). Residue serine 14 participates in CTP binding. Serine 14 provides a ligand contact to UTP. ATP contacts are provided by residues 15–20 and aspartate 72; that span reads SLGKGI. Aspartate 72 and glutamate 140 together coordinate Mg(2+). Residues 147–149, 187–192, and lysine 223 contribute to the CTP site; these read DIE and KTKPTQ. Residues 187–192 and lysine 223 contribute to the UTP site; that span reads KTKPTQ. Position 239–241 (239–241) interacts with ATP; sequence KDV. A Glutamine amidotransferase type-1 domain is found at 291-542; that stretch reads VIGMVGKYIE…VAAASAHQKR (252 aa). Position 352 (glycine 352) interacts with L-glutamine. The Nucleophile; for glutamine hydrolysis role is filled by cysteine 379. Residues 380–383, glutamate 403, and arginine 470 contribute to the L-glutamine site; that span reads LGMQ. Active-site residues include histidine 515 and glutamate 517.

Belongs to the CTP synthase family. In terms of assembly, homotetramer.

The enzyme catalyses UTP + L-glutamine + ATP + H2O = CTP + L-glutamate + ADP + phosphate + 2 H(+). The catalysed reaction is L-glutamine + H2O = L-glutamate + NH4(+). It catalyses the reaction UTP + NH4(+) + ATP = CTP + ADP + phosphate + 2 H(+). It participates in pyrimidine metabolism; CTP biosynthesis via de novo pathway; CTP from UDP: step 2/2. Its activity is regulated as follows. Allosterically activated by GTP, when glutamine is the substrate; GTP has no effect on the reaction when ammonia is the substrate. The allosteric effector GTP functions by stabilizing the protein conformation that binds the tetrahedral intermediate(s) formed during glutamine hydrolysis. Inhibited by the product CTP, via allosteric rather than competitive inhibition. In terms of biological role, catalyzes the ATP-dependent amination of UTP to CTP with either L-glutamine or ammonia as the source of nitrogen. Regulates intracellular CTP levels through interactions with the four ribonucleotide triphosphates. In Shewanella sp. (strain MR-4), this protein is CTP synthase.